The chain runs to 1499 residues: Autophagy-related protein 2 (1499 aa).

Polar residues predominate over residues 211 to 221; it reads EQSVPSYGSSS. The segment at 211 to 237 is disordered; sequence EQSVPSYGSSSSDKEDDNTSDSEDPLS. The segment covering 224–234 has biased composition (acidic residues); sequence KEDDNTSDSED.

It belongs to the ATG2 family.

It is found in the preautophagosomal structure membrane. The protein resides in the endoplasmic reticulum membrane. It catalyses the reaction a 1,2-diacyl-sn-glycero-3-phosphocholine(in) = a 1,2-diacyl-sn-glycero-3-phosphocholine(out). It carries out the reaction a 1,2-diacyl-sn-glycero-3-phospho-L-serine(in) = a 1,2-diacyl-sn-glycero-3-phospho-L-serine(out). The catalysed reaction is a 1,2-diacyl-sn-glycero-3-phosphoethanolamine(in) = a 1,2-diacyl-sn-glycero-3-phosphoethanolamine(out). Functionally, lipid transfer protein required for autophagosome completion and peroxisome degradation. Tethers the edge of the isolation membrane (IM) to the endoplasmic reticulum (ER) and mediates direct lipid transfer from ER to IM for IM expansion. ATG2 binds to the ER exit site (ERES), which is the membrane source for autophagosome formation, using basic residues in its N-terminal region (NR) and to the expanding edge of the IM through its C-terminal region. The latter binding is assisted by an ATG18-PtdIns3P interaction. ATG2 then extracts phospholipids from the membrane source using its NR and transfers them to ATG9 to the IM through its predicted beta-sheet-rich structure for membrane expansion. The protein is Autophagy-related protein 2 of Kluyveromyces marxianus (strain DMKU3-1042 / BCC 29191 / NBRC 104275) (Yeast).